The sequence spans 352 residues: tRNA-specific 2-thiouridylase MnmA (352 aa).

6-13 (AVSGGTDS) serves as a coordination point for ATP. Residue C92 is the Nucleophile of the active site. The cysteines at positions 92 and 189 are disulfide-linked. Residue G116 coordinates ATP. Positions 139-141 (KDQ) are interaction with tRNA. The Cysteine persulfide intermediate role is filled by C189. Residues 294–295 (RY) form an interaction with tRNA region.

This sequence belongs to the MnmA/TRMU family.

It is found in the cytoplasm. The catalysed reaction is S-sulfanyl-L-cysteinyl-[protein] + uridine(34) in tRNA + AH2 + ATP = 2-thiouridine(34) in tRNA + L-cysteinyl-[protein] + A + AMP + diphosphate + H(+). In terms of biological role, catalyzes the 2-thiolation of uridine at the wobble position (U34) of tRNA, leading to the formation of s(2)U34. The protein is tRNA-specific 2-thiouridylase MnmA of Lawsonia intracellularis (strain PHE/MN1-00).